The primary structure comprises 177 residues: Shikimate kinase (177 aa).

Residue 17-22 (GVGKTT) participates in ATP binding. T21 contributes to the Mg(2+) binding site. Positions 39, 63, and 86 each coordinate substrate. R125 lines the ATP pocket. Residue R143 participates in substrate binding. R159 is an ATP binding site.

This sequence belongs to the shikimate kinase family. Monomer. Mg(2+) serves as cofactor.

The protein localises to the cytoplasm. The catalysed reaction is shikimate + ATP = 3-phosphoshikimate + ADP + H(+). Its pathway is metabolic intermediate biosynthesis; chorismate biosynthesis; chorismate from D-erythrose 4-phosphate and phosphoenolpyruvate: step 5/7. Its function is as follows. Catalyzes the specific phosphorylation of the 3-hydroxyl group of shikimic acid using ATP as a cosubstrate. The chain is Shikimate kinase from Bacillus licheniformis (strain ATCC 14580 / DSM 13 / JCM 2505 / CCUG 7422 / NBRC 12200 / NCIMB 9375 / NCTC 10341 / NRRL NRS-1264 / Gibson 46).